The following is a 196-amino-acid chain: MHESSALSKLYNWDCSVVFIILNIYTTMLVLVTTGGTVPFEALIELVLSHESITTLSQLGFSKMRVQYGRGNRHIFTKHHKEGVMSITGFEYTDDLAGEMSRAHLVISHAGTGSVLDALRIGKHPVVVVNSKLMDNHQIEIAEELFRKRHLLVSGDTDSVGFIKALKMHREYLFETLPDPEEGILQRIIEETVSFM.

The protein belongs to the glycosyltransferase 28 family. Heterodimer with ALG14 to form a functional enzyme.

It is found in the endoplasmic reticulum. It catalyses the reaction an N-acetyl-alpha-D-glucosaminyl-diphospho-di-trans,poly-cis-dolichol + UDP-N-acetyl-alpha-D-glucosamine = an N,N'-diacetylchitobiosyl-diphospho-di-trans,poly-cis-dolichol + UDP + H(+). Involved in protein N-glycosylation. Essential for the second step of the dolichol-linked oligosaccharide pathway. This Yarrowia lipolytica (strain CLIB 122 / E 150) (Yeast) protein is UDP-N-acetylglucosamine transferase subunit ALG13 (ALG13).